We begin with the raw amino-acid sequence, 224 residues long: dTTP/UTP pyrophosphatase (224 aa).

Asp-77 (proton acceptor) is an active-site residue.

Belongs to the Maf family. YhdE subfamily. The cofactor is a divalent metal cation.

It is found in the cytoplasm. The enzyme catalyses dTTP + H2O = dTMP + diphosphate + H(+). It carries out the reaction UTP + H2O = UMP + diphosphate + H(+). Its function is as follows. Nucleoside triphosphate pyrophosphatase that hydrolyzes dTTP and UTP. May have a dual role in cell division arrest and in preventing the incorporation of modified nucleotides into cellular nucleic acids. This chain is dTTP/UTP pyrophosphatase, found in Dehalococcoides mccartyi (strain ATCC BAA-2100 / JCM 16839 / KCTC 5957 / BAV1).